A 115-amino-acid chain; its full sequence is Meiotically up-regulated gene 106 protein (115 aa).

The first 34 residues, 1–34, serve as a signal peptide directing secretion; the sequence is MSIKVEWIKFTRLKKCATLLVQLSLLRYRYMVLA. A run of 2 helical transmembrane segments spans residues 41–60 and 81–103; these read CIVVTIYCGCLFWFSNGALF and GVKLKIFLFTILLAFETNTFTPY.

It localises to the membrane. Has a role in meiosis. This chain is Meiotically up-regulated gene 106 protein (mug106), found in Schizosaccharomyces pombe (strain 972 / ATCC 24843) (Fission yeast).